Here is a 454-residue protein sequence, read N- to C-terminus: Asparagine--tRNA ligase (454 aa).

It belongs to the class-II aminoacyl-tRNA synthetase family. In terms of assembly, homodimer.

It is found in the cytoplasm. The catalysed reaction is tRNA(Asn) + L-asparagine + ATP = L-asparaginyl-tRNA(Asn) + AMP + diphosphate + H(+). The chain is Asparagine--tRNA ligase from Ureaplasma parvum serovar 3 (strain ATCC 27815 / 27 / NCTC 11736).